The following is a 205-amino-acid chain: ATP synthase subunit b (205 aa).

The chain crosses the membrane as a helical span at residues Phe51 to Leu69.

This sequence belongs to the ATPase B chain family. In terms of assembly, F-type ATPases have 2 components, F(1) - the catalytic core - and F(0) - the membrane proton channel. F(1) has five subunits: alpha(3), beta(3), gamma(1), delta(1), epsilon(1). F(0) has three main subunits: a(1), b(2) and c(10-14). The alpha and beta chains form an alternating ring which encloses part of the gamma chain. F(1) is attached to F(0) by a central stalk formed by the gamma and epsilon chains, while a peripheral stalk is formed by the delta and b chains.

The protein localises to the cell inner membrane. F(1)F(0) ATP synthase produces ATP from ADP in the presence of a proton or sodium gradient. F-type ATPases consist of two structural domains, F(1) containing the extramembraneous catalytic core and F(0) containing the membrane proton channel, linked together by a central stalk and a peripheral stalk. During catalysis, ATP synthesis in the catalytic domain of F(1) is coupled via a rotary mechanism of the central stalk subunits to proton translocation. Its function is as follows. Component of the F(0) channel, it forms part of the peripheral stalk, linking F(1) to F(0). This chain is ATP synthase subunit b, found in Geotalea uraniireducens (strain Rf4) (Geobacter uraniireducens).